The following is a 146-amino-acid chain: Minor capsid protein P5 (146 aa).

In terms of assembly, interacts with the major capsid protein.

It localises to the virion. In terms of biological role, one of the minor capsid proteins that constitute a network internal to the major capsid proteins and outside the lipid membrane. The minor capsid proteins glue and stabilize the capsomers. This is Minor capsid protein P5 from Paramecium bursaria Chlorella virus 1 (PBCV-1).